Consider the following 336-residue polypeptide: Eukaryotic translation initiation factor 3 subunit I (336 aa).

5 WD repeats span residues 8 to 47 (GHER…RLGT), 50 to 91 (GHLG…KVWE), 146 to 185 (CTES…QLEN), 190 to 229 (EFDH…ILKT), and 287 to 326 (GHFG…FDFM).

It belongs to the eIF-3 subunit I family. In terms of assembly, component of the eukaryotic translation initiation factor 3 (eIF-3) complex.

It localises to the cytoplasm. Its function is as follows. Component of the eukaryotic translation initiation factor 3 (eIF-3) complex, which is involved in protein synthesis of a specialized repertoire of mRNAs and, together with other initiation factors, stimulates binding of mRNA and methionyl-tRNAi to the 40S ribosome. The eIF-3 complex specifically targets and initiates translation of a subset of mRNAs involved in cell proliferation. This is Eukaryotic translation initiation factor 3 subunit I (tif34) from Emericella nidulans (strain FGSC A4 / ATCC 38163 / CBS 112.46 / NRRL 194 / M139) (Aspergillus nidulans).